Consider the following 74-residue polypeptide: Omega-filistatoxin-Kh1a (74 aa).

In terms of processing, contains 6 disulfide bonds. In terms of tissue distribution, expressed by the venom gland.

Its subcellular location is the secreted. Functionally, potently blocks vertebrate calcium channels Cav1 and Cav2. Is the most active on Cav2.2/CACNA1B (from HEK) (IC(50)=2.3 nM), followed by Cav2.1/CACNA1A (IC(50)=4.3 nM), Cav2.2/CACNA1B (from oocyte) (IC(50)=14.4 nM), Cav1.2/CACNA1C (IC(50)=26.8 nM), and Cav2.3/CACNA1E (IC(50)=96.4 nM). The polypeptide is Omega-filistatoxin-Kh1a (Kukulcania hibernalis (Southern house spider)).